Here is a 727-residue protein sequence, read N- to C-terminus: Iron-sulfur clusters transporter atm1, mitochondrial (727 aa).

The disordered stretch occupies residues 46 to 97; sequence NSPLRKDASKEPALASNSKTTNPIPTQASASVNPPKDARNATTAKKDLLSET. The span at 60-77 shows a compositional bias: polar residues; the sequence is ASNSKTTNPIPTQASASV. Residues 81 to 94 are compositionally biased toward basic and acidic residues; the sequence is KDARNATTAKKDLL. The chain crosses the membrane as a helical span at residues 131-152; the sequence is VGTALSLLVGAKILNVEVPFYF. The ABC transmembrane type-1 domain occupies 131–421; that stretch reads VGTALSLLVG…LGSVYRELRQ (291 aa). At 153 to 175 the chain is on the mitochondrial intermembrane side; that stretch reads KSIVDSMNIDFATVGGTAYTVAG. The helical transmembrane segment at 176–199 threads the bilayer; the sequence is SMIIAYGVTRIGATLFQELRNAVF. The Mitochondrial matrix segment spans residues 200–248; the sequence is ASVAQKAIRRVARNVFEHLLRLDLNFHLSRQTGGLTRAIDRGTKGISFL. The helical transmembrane segment at 249 to 272 threads the bilayer; the sequence is LTSMVFHVVPTALEISLVCGILTY. A topological domain (mitochondrial intermembrane) is located at residue Gln-273. The helical transmembrane segment at 274–294 threads the bilayer; that stretch reads YGFQFAAITAATMVAYTAFTI. At 295–360 the chain is on the mitochondrial matrix side; that stretch reads TTTAWRTKFR…ASIKVTTSLA (66 aa). Residues 300 to 304 and 363 to 366 contribute to the glutathione site; these read RTKFR and NSGQ. The helical transmembrane segment at 361 to 379 threads the bilayer; sequence FLNSGQNMIFSSALAAMMY. Residues 380 to 394 lie on the Mitochondrial intermembrane side of the membrane; it reads LAANGVANGNLTVGD. The chain crosses the membrane as a helical span at residues 395–416; it reads LVMVNQLVFQLSVPLNFLGSVY. Glutathione is bound at residue Gly-413. Residues 417–727 lie on the Mitochondrial matrix side of the membrane; sequence RELRQSLLDM…DMAPGPKAQQ (311 aa). Positions 456-692 constitute an ABC transporter domain; that stretch reads IRFENVTFGY…NGIYAELWNA (237 aa). Residues Tyr-465 and 489–500 each bind ATP; that span reads GPSGCGKSTILR. The segment covering 702–719 has biased composition (basic and acidic residues); it reads EFERETERDDVESKERDM. Positions 702-727 are disordered; it reads EFERETERDDVESKERDMAPGPKAQQ.

It belongs to the ABC transporter superfamily. ABCB family. Heavy Metal importer (TC 3.A.1.210) subfamily. In terms of assembly, homodimer.

It is found in the mitochondrion inner membrane. In terms of biological role, performs an essential function in the generation of cytoplasmic iron-sulfur proteins by mediating the ATP-dependent export of Fe/S cluster precursors synthesized by nfs1 and other mitochondrial proteins. Hydrolyzes ATP. Binds glutathione and may function by transporting a glutathione-conjugated iron-sulfur compound. This is Iron-sulfur clusters transporter atm1, mitochondrial from Aspergillus fumigatus (strain ATCC MYA-4609 / CBS 101355 / FGSC A1100 / Af293) (Neosartorya fumigata).